Consider the following 506-residue polypeptide: Maturase K (506 aa).

The protein belongs to the intron maturase 2 family. MatK subfamily.

The protein localises to the plastid. The protein resides in the chloroplast. Functionally, usually encoded in the trnK tRNA gene intron. Probably assists in splicing its own and other chloroplast group II introns. This Artanema fimbriatum protein is Maturase K.